We begin with the raw amino-acid sequence, 172 residues long: C-phycocyanin beta chain (172 aa).

An N4-methylasparagine modification is found at asparagine 72. Residues cysteine 82 and cysteine 153 each coordinate (2R,3E)-phycocyanobilin.

Belongs to the phycobiliprotein family. Heterodimer of an alpha and a beta subunit, which further assembles into trimers and the trimers into hexamers. The basic functional unit of phycobiliproteins is a ring-shaped hexamer formed from two back-to-back trimers contacting via the alpha chain subunits. The trimers are composed of alpha/beta subunit heterodimers arranged around a three-fold axis of symmetry. The phycoerythrins also contain a gamma subunit which is located in the center of the hexamer. Contains two covalently linked bilin chromophores.

It localises to the plastid. The protein localises to the chloroplast thylakoid membrane. In terms of biological role, light-harvesting photosynthetic bile pigment-protein from the phycobiliprotein complex (phycobilisome, PBS). Phycocyanin is the major phycobiliprotein in the PBS rod. This Aglaothamnion neglectum (Red alga) protein is C-phycocyanin beta chain (cpcB).